Consider the following 131-residue polypeptide: MSMSDPIADLLTRIRNAQMVAKTTVSVPSSKVKVAIAQVLTEEGYIDSFKVNANDGKPELEIVLKYYAGRPVIERIERVSRPGLRVYRGSDAIPQVQNGLGVAIVTTPKGVMTDRKARATGVGGEVLCYVA.

It belongs to the universal ribosomal protein uS8 family. Part of the 30S ribosomal subunit. Contacts proteins S5 and S12.

One of the primary rRNA binding proteins, it binds directly to 16S rRNA central domain where it helps coordinate assembly of the platform of the 30S subunit. The chain is Small ribosomal subunit protein uS8 from Albidiferax ferrireducens (strain ATCC BAA-621 / DSM 15236 / T118) (Rhodoferax ferrireducens).